We begin with the raw amino-acid sequence, 237 residues long: UDP-2,3-diacylglucosamine hydrolase (237 aa).

Mn(2+)-binding residues include Asp-9, His-11, Asp-42, Asn-80, and His-115. 80 to 81 (NR) serves as a coordination point for substrate. Positions 123, 161, 165, 168, and 196 each coordinate substrate. Mn(2+)-binding residues include His-196 and His-198.

Belongs to the LpxH family. Requires Mn(2+) as cofactor.

The protein localises to the cell inner membrane. It catalyses the reaction UDP-2-N,3-O-bis[(3R)-3-hydroxytetradecanoyl]-alpha-D-glucosamine + H2O = 2-N,3-O-bis[(3R)-3-hydroxytetradecanoyl]-alpha-D-glucosaminyl 1-phosphate + UMP + 2 H(+). It functions in the pathway glycolipid biosynthesis; lipid IV(A) biosynthesis; lipid IV(A) from (3R)-3-hydroxytetradecanoyl-[acyl-carrier-protein] and UDP-N-acetyl-alpha-D-glucosamine: step 4/6. Hydrolyzes the pyrophosphate bond of UDP-2,3-diacylglucosamine to yield 2,3-diacylglucosamine 1-phosphate (lipid X) and UMP by catalyzing the attack of water at the alpha-P atom. Involved in the biosynthesis of lipid A, a phosphorylated glycolipid that anchors the lipopolysaccharide to the outer membrane of the cell. The chain is UDP-2,3-diacylglucosamine hydrolase from Haemophilus influenzae (strain PittGG).